An 87-amino-acid polypeptide reads, in one-letter code: Neurotoxin Cex1 (87 aa).

Positions 1–19 (MNSLLMITTCLVLFGTVWA) are cleaved as a signal peptide. The LCN-type CS-alpha/beta domain occupies 20–85 (KEGYLVSKST…TYPIPGKSCG (66 aa)). Intrachain disulfides connect C31–C84, C35–C60, C44–C65, and C48–C67. The residue at position 84 (C84) is a Cysteine amide. Positions 85–87 (GKK) are excised as a propeptide.

The protein belongs to the long (4 C-C) scorpion toxin superfamily. Sodium channel inhibitor family. Beta subfamily. Expressed by the venom gland.

The protein localises to the secreted. Functionally, beta toxins bind voltage-independently at site-4 of sodium channels (Nav) and shift the voltage of activation toward more negative potentials thereby affecting sodium channel activation and promoting spontaneous and repetitive firing. In Centruroides exilicauda (Bark scorpion), this protein is Neurotoxin Cex1.